The primary structure comprises 515 residues: 1-pyrroline-5-carboxylate dehydrogenase 2 (515 aa).

Catalysis depends on residues glutamate 286 and cysteine 320.

Belongs to the aldehyde dehydrogenase family. RocA subfamily.

The catalysed reaction is L-glutamate 5-semialdehyde + NAD(+) + H2O = L-glutamate + NADH + 2 H(+). It functions in the pathway amino-acid degradation; L-proline degradation into L-glutamate; L-glutamate from L-proline: step 2/2. Functionally, important for the use of proline as a sole carbon and energy source or a sole nitrogen source. The sequence is that of 1-pyrroline-5-carboxylate dehydrogenase 2 from Bacillus subtilis (strain 168).